Consider the following 80-residue polypeptide: Large ribosomal subunit protein bL31B (80 aa).

This sequence belongs to the bacterial ribosomal protein bL31 family. Type B subfamily. Part of the 50S ribosomal subunit.

This is Large ribosomal subunit protein bL31B from Shouchella clausii (strain KSM-K16) (Alkalihalobacillus clausii).